The chain runs to 694 residues: Glycine--tRNA ligase beta subunit (694 aa).

The protein belongs to the class-II aminoacyl-tRNA synthetase family. Tetramer of two alpha and two beta subunits.

It localises to the cytoplasm. The enzyme catalyses tRNA(Gly) + glycine + ATP = glycyl-tRNA(Gly) + AMP + diphosphate. This Moorella thermoacetica (strain ATCC 39073 / JCM 9320) protein is Glycine--tRNA ligase beta subunit.